The following is a 230-amino-acid chain: Dephospho-CoA kinase (230 aa).

The segment at 1-20 (MSKYAAIPSPYSHQPQAPDH) is disordered. The DPCK domain occupies 26 to 225 (VVGLTGGIGS…QDYLKLAQQL (200 aa)). Position 34–39 (34–39 (GSGKSA)) interacts with ATP.

The protein belongs to the CoaE family.

The protein localises to the cytoplasm. The enzyme catalyses 3'-dephospho-CoA + ATP = ADP + CoA + H(+). The protein operates within cofactor biosynthesis; coenzyme A biosynthesis; CoA from (R)-pantothenate: step 5/5. In terms of biological role, catalyzes the phosphorylation of the 3'-hydroxyl group of dephosphocoenzyme A to form coenzyme A. The protein is Dephospho-CoA kinase of Psychrobacter arcticus (strain DSM 17307 / VKM B-2377 / 273-4).